The primary structure comprises 188 residues: Movement protein (188 aa).

The protein belongs to the tombusvirus/aureusvirus movement protein p22 family. As to quaternary structure, interacts with host protein HFI22. Post-translationally, phosphorylated.

Its subcellular location is the host membrane. In terms of biological role, transports viral genome to neighboring plant cells directly through plasmosdesmata, without any budding. The movement protein allows efficient cell to cell propagation, by bypassing the host cell wall barrier. This Capsicum annuum (Capsicum pepper) protein is Movement protein.